The sequence spans 409 residues: Probable tRNA pseudouridine synthase D (409 aa).

The Nucleophile role is filled by D73. The TRUD domain maps to 146-365; that stretch reads GFPNFFGDQR…SSGDRRIISA (220 aa).

This sequence belongs to the pseudouridine synthase TruD family.

It catalyses the reaction uridine(13) in tRNA = pseudouridine(13) in tRNA. In terms of biological role, could be responsible for synthesis of pseudouridine from uracil-13 in transfer RNAs. The sequence is that of Probable tRNA pseudouridine synthase D from Thermoplasma volcanium (strain ATCC 51530 / DSM 4299 / JCM 9571 / NBRC 15438 / GSS1).